Consider the following 252-residue polypeptide: Imidazole glycerol phosphate synthase subunit HisF (252 aa).

Catalysis depends on residues Asp11 and Asp130.

This sequence belongs to the HisA/HisF family. In terms of assembly, heterodimer of HisH and HisF.

It is found in the cytoplasm. It catalyses the reaction 5-[(5-phospho-1-deoxy-D-ribulos-1-ylimino)methylamino]-1-(5-phospho-beta-D-ribosyl)imidazole-4-carboxamide + L-glutamine = D-erythro-1-(imidazol-4-yl)glycerol 3-phosphate + 5-amino-1-(5-phospho-beta-D-ribosyl)imidazole-4-carboxamide + L-glutamate + H(+). It functions in the pathway amino-acid biosynthesis; L-histidine biosynthesis; L-histidine from 5-phospho-alpha-D-ribose 1-diphosphate: step 5/9. Its function is as follows. IGPS catalyzes the conversion of PRFAR and glutamine to IGP, AICAR and glutamate. The HisF subunit catalyzes the cyclization activity that produces IGP and AICAR from PRFAR using the ammonia provided by the HisH subunit. This Bacillus velezensis (strain DSM 23117 / BGSC 10A6 / LMG 26770 / FZB42) (Bacillus amyloliquefaciens subsp. plantarum) protein is Imidazole glycerol phosphate synthase subunit HisF.